The chain runs to 283 residues: Formamidopyrimidine-DNA glycosylase (283 aa).

P2 serves as the catalytic Schiff-base intermediate with DNA. Catalysis depends on E3, which acts as the Proton donor. The active-site Proton donor; for beta-elimination activity is the K58. DNA is bound by residues H100, R119, and K162. The FPG-type zinc-finger motif lies at 247 to 283; it reads RVYGREGQRCQTPDCAEKILRKVQSGRSSFYCPACQR. R273 acts as the Proton donor; for delta-elimination activity in catalysis.

The protein belongs to the FPG family. In terms of assembly, monomer. Requires Zn(2+) as cofactor.

It carries out the reaction Hydrolysis of DNA containing ring-opened 7-methylguanine residues, releasing 2,6-diamino-4-hydroxy-5-(N-methyl)formamidopyrimidine.. The catalysed reaction is 2'-deoxyribonucleotide-(2'-deoxyribose 5'-phosphate)-2'-deoxyribonucleotide-DNA = a 3'-end 2'-deoxyribonucleotide-(2,3-dehydro-2,3-deoxyribose 5'-phosphate)-DNA + a 5'-end 5'-phospho-2'-deoxyribonucleoside-DNA + H(+). Its function is as follows. Involved in base excision repair of DNA damaged by oxidation or by mutagenic agents. Acts as a DNA glycosylase that recognizes and removes damaged bases. Has a preference for oxidized purines, such as 7,8-dihydro-8-oxoguanine (8-oxoG). Has AP (apurinic/apyrimidinic) lyase activity and introduces nicks in the DNA strand. Cleaves the DNA backbone by beta-delta elimination to generate a single-strand break at the site of the removed base with both 3'- and 5'-phosphates. This Jannaschia sp. (strain CCS1) protein is Formamidopyrimidine-DNA glycosylase.